We begin with the raw amino-acid sequence, 255 residues long: Complement C1q-like protein 3 (255 aa).

A signal peptide spans 1 to 20 (MVLLLVILIPVLVSSAGTSA). The interval 39–109 (KAPSTAATPD…GLPGPPGAPG (71 aa)) is disordered. The 51-residue stretch at 61–111 (GPKGEAGRPGKAGPRGPPGEPGPPGPMGPPGEKGEPGRQGLPGPPGAPGLN) folds into the Collagen-like domain. Over residues 75 to 89 (RGPPGEPGPPGPMGP) the composition is skewed to pro residues. Residues 122–255 (STVPKIAFYA…TFSGFIIYAD (134 aa)) form the C1q domain.

Forms homooligomers. Interacts with ADGRB3. Interacts with C1QL2 and C1QL4, when proteins are coexpressed; this interaction does not occur after secretion. In terms of tissue distribution, highly expressed in adipose tissue, with expression levels at least 2 orders of magnitude higher than in other tissues, including brain and kidney.

It localises to the secreted. Its function is as follows. May regulate the number of excitatory synapses that are formed on hippocampus neurons. Has no effect on inhibitory synapses. Plays a role in glucose homeostasis. Via AMPK signaling pathway, stimulates glucose uptake in adipocytes, myotubes and hepatocytes and enhances insulin-stimulated glucose uptake. In a hepatoma cell line, reduces the expression of gluconeogenic enzymes G6PC1 and PCK1 and hence decreases de novo glucose production. This chain is Complement C1q-like protein 3 (C1QL3), found in Homo sapiens (Human).